A 391-amino-acid chain; its full sequence is Succinate--CoA ligase [ADP-forming] subunit beta (391 aa).

The ATP-grasp domain occupies 9–246 (KHLFTEAGIA…LTQEDETEVR (238 aa)). Residues K46, 53–55 (GRG), E99, L102, and E107 each bind ATP. The Mg(2+) site is built by N199 and D213. Substrate contacts are provided by residues N266 and 323–325 (GIV).

The protein belongs to the succinate/malate CoA ligase beta subunit family. As to quaternary structure, heterotetramer of two alpha and two beta subunits. Requires Mg(2+) as cofactor.

The enzyme catalyses succinate + ATP + CoA = succinyl-CoA + ADP + phosphate. The catalysed reaction is GTP + succinate + CoA = succinyl-CoA + GDP + phosphate. Its pathway is carbohydrate metabolism; tricarboxylic acid cycle; succinate from succinyl-CoA (ligase route): step 1/1. Succinyl-CoA synthetase functions in the citric acid cycle (TCA), coupling the hydrolysis of succinyl-CoA to the synthesis of either ATP or GTP and thus represents the only step of substrate-level phosphorylation in the TCA. The beta subunit provides nucleotide specificity of the enzyme and binds the substrate succinate, while the binding sites for coenzyme A and phosphate are found in the alpha subunit. The chain is Succinate--CoA ligase [ADP-forming] subunit beta from Halorhodospira halophila (strain DSM 244 / SL1) (Ectothiorhodospira halophila (strain DSM 244 / SL1)).